A 423-amino-acid chain; its full sequence is Keratin, type I cytoskeletal 18 (423 aa).

Residue serine 2 is modified to N-acetylserine. The segment at 2-71 (SFTTRSTTFS…GLAGMGGVQT (70 aa)) is head. 4 positions are modified to phosphoserine: serine 7, serine 11, serine 16, and serine 19. Phosphoserine; alternate is present on residues serine 31 and serine 32. O-linked (GlcNAc) serine; alternate glycans are attached at residues serine 31 and serine 32. Serine 35 carries the post-translational modification Phosphoserine. Tyrosine 37 is subject to Phosphotyrosine. At serine 43 the chain carries Phosphoserine. Arginine 46 carries the post-translational modification Omega-N-methylarginine. Serine 50 is subject to Phosphoserine; alternate. Serine 50 carries O-linked (GlcNAc) serine; alternate glycosylation. Phosphoserine; by MAPKAPK2 and MAPKAPK3 is present on serine 52. A phosphoserine mark is found at serine 57 and serine 60. Residues 62-366 (GLAGMGGVQT…EALLNIKVKL (305 aa)) form a necessary for interaction with PNN region. An interaction with TRADD region spans residues 69–121 (VQTEKETMQDLNDRLASYLDKVKNLETENRRLESKIREYLEKRGPQGVRDWGH). The coil 1A stretch occupies residues 72-107 (EKETMQDLNDRLASYLDKVKNLETENRRLESKIREY). An IF rod domain is found at 72–384 (EKETMQDLND…RLLEDGDDFS (313 aa)). Residue lysine 73 forms a Glycyl lysine isopeptide (Lys-Gly) (interchain with G-Cter in SUMO2) linkage. At serine 85 the chain carries Phosphoserine. The segment at 108-125 (LEKRGPQGVRDWGHYFKT) is linker 1. N6-acetyllysine is present on lysine 124. The tract at residues 126–217 (IEDLRAQIFA…KNHEEEVQGL (92 aa)) is coil 1B. Phosphoserine is present on residues serine 137 and serine 170. The linker 12 stretch occupies residues 218 to 241 (EAQIASSGLTVEVDAPKSQDLSKI). The interaction with DNAJB6 stretch occupies residues 236–384 (QDLSKIMADI…RLLEDGDDFS (149 aa)). Lysine 240 participates in a covalent cross-link: Glycyl lysine isopeptide (Lys-Gly) (interchain with G-Cter in SUMO2). Positions 242-380 (MADIRAQYEQ…ATYRRLLEDG (139 aa)) are coil 2. Threonine 295 carries the post-translational modification Phosphothreonine. Residues lysine 363 and lysine 365 each participate in a glycyl lysine isopeptide (Lys-Gly) (interchain with G-Cter in SUMO2) cross-link. Positions 381–423 (DDFSLNDALDSSNSMQTVQRTTTRKVVDGKVVSETNDTRVLRH) are tail. 4 positions are modified to phosphoserine: serine 384, serine 391, serine 392, and serine 394. The residue at position 397 (threonine 397) is a Phosphothreonine. Lysine 410 participates in a covalent cross-link: Glycyl lysine isopeptide (Lys-Gly) (interchain with G-Cter in SUMO2).

This sequence belongs to the intermediate filament family. As to quaternary structure, heterotetramer of two type I and two type II keratins. KRT18 associates with KRT8. Interacts with PNN and mutated CFTR. Interacts with YWHAE, YWHAH and YWHAZ only when phosphorylated. Interacts with DNAJB6, TCHP and TRADD. Interacts with the thrombin-antithrombin complex. Interacts with FAM83H. Interacts with EPPK1. Interacts with PKP1 and PKP2. In terms of processing, phosphorylation increases by IL-6. Post-translationally, proteolytically cleaved by caspases during epithelial cell apoptosis. Cleavage occurs at Asp-231 by either caspase-3, caspase-6 or caspase-7. Dephosphorylated by ethanol. In terms of processing, O-GlcNAcylation increases solubility, and decreases stability by inducing proteasomal degradation. Expressed on the plasma membrane of hepatocytes and in the narrow apical portions of supporting cells in the vomeronasal sensory epithelium. Detected in the type III alveolar cells of the lung, in the proliferative crypt epithelium of the small intestine and in the older intragemmal cells of the tongue.

It localises to the nucleus matrix. The protein resides in the cytoplasm. The protein localises to the perinuclear region. Its subcellular location is the nucleus. It is found in the nucleolus. Its function is as follows. When phosphorylated, plays a role in filament reorganization. Involved in the delivery of mutated CFTR to the plasma membrane. Together with KRT8, is involved in interleukin-6 (IL-6)-mediated barrier protection. Involved in the uptake of thrombin-antithrombin complexes by hepatic cells. This is Keratin, type I cytoskeletal 18 from Rattus norvegicus (Rat).